The following is a 463-amino-acid chain: Paraneoplastic antigen Ma3 (463 aa).

A disordered region spans residues 363–410 (VGAVPLPASGNSFDARPSQGYRRRRGRGQHRRGGVARAGSRGSRKRKR). The span at 383–396 (YRRRRGRGQHRRGG) shows a compositional bias: basic residues. The CCHC-type zinc finger occupies 412 to 429 (TFCYSCGEDGHIRVQCIN). The segment at 440-463 (KQAAVESGNGNWAWDKSHPKSKAK) is disordered.

This sequence belongs to the PNMA family. Expressed at high levels in the brain and testis. Expressed at lower levels in the heart, trachea and kidney.

It is found in the nucleus. The protein localises to the nucleolus. The sequence is that of Paraneoplastic antigen Ma3 (PNMA3) from Homo sapiens (Human).